The primary structure comprises 212 residues: Adenylate kinase (212 aa).

An ATP-binding site is contributed by 10–15 (GAGKGT). Residues 30 to 59 (AIGDIFRTIIKTSTSEAELINNYVRQGELI) form an NMP region. AMP-binding positions include R36, 57–59 (ELI), 85–88 (GYPR), and Q92. Positions 122-160 (GRYSCKNCGKIYNRYFLQPKTDNVCDVCGSSTFDYRKDD) are LID. R123 is a binding site for ATP. Residues C126 and C129 each contribute to the Zn(2+) site. 132 to 133 (IY) is a binding site for ATP. 2 residues coordinate Zn(2+): C146 and C149. Positions 157 and 168 each coordinate AMP. K196 is an ATP binding site.

It belongs to the adenylate kinase family. Monomer.

Its subcellular location is the cytoplasm. The enzyme catalyses AMP + ATP = 2 ADP. Its pathway is purine metabolism; AMP biosynthesis via salvage pathway; AMP from ADP: step 1/1. In terms of biological role, catalyzes the reversible transfer of the terminal phosphate group between ATP and AMP. Plays an important role in cellular energy homeostasis and in adenine nucleotide metabolism. This is Adenylate kinase from Rickettsia peacockii (strain Rustic).